A 510-amino-acid chain; its full sequence is GMP synthase [glutamine-hydrolyzing] (510 aa).

Residues 5–195 form the Glutamine amidotransferase type-1 domain; the sequence is LVLVVDFGGQ…LFNVCNLKGD (191 aa). Cys82 acts as the Nucleophile in catalysis. Residues His169 and Glu171 contribute to the active site. Positions 196-385 constitute a GMPS ATP-PPase domain; that stretch reads WSMSSFAEQQ…LGIPHKLVWR (190 aa). 223 to 229 is an ATP binding site; that stretch reads SGGVDSS.

As to quaternary structure, homodimer.

The catalysed reaction is XMP + L-glutamine + ATP + H2O = GMP + L-glutamate + AMP + diphosphate + 2 H(+). The protein operates within purine metabolism; GMP biosynthesis; GMP from XMP (L-Gln route): step 1/1. Functionally, catalyzes the synthesis of GMP from XMP. This Clostridium botulinum (strain Okra / Type B1) protein is GMP synthase [glutamine-hydrolyzing].